Here is a 748-residue protein sequence, read N- to C-terminus: Choline O-acetyltransferase (748 aa).

The segment covering 1–10 (MGLRTAKKRG) has biased composition (basic residues). Residues 1 to 89 (MGLRTAKKRG…EWCGAASAEA (89 aa)) form a disordered region. The span at 17–32 (WKREEGGGTRGRREVR) shows a compositional bias: basic and acidic residues. The segment covering 40 to 53 (GGRGDPGDVGGPAG) has biased composition (gly residues). Low complexity-rich tracts occupy residues 54-65 (NPGCSPHPRAAT) and 73-89 (HTPA…SAEA). The residue at position 125 (Ser125) is a Phosphoserine. His442 (proton acceptor) is an active-site residue. Ser473 bears the Phosphoserine mark. Residues 520 to 532 (GKTF…CSPD), Ser558, and Gln659 contribute to the CoA site. The segment at 727 to 748 (PTESKPLATKEKATRPSQGHQP) is disordered.

The protein belongs to the carnitine/choline acetyltransferase family.

The catalysed reaction is choline + acetyl-CoA = acetylcholine + CoA. Its function is as follows. Catalyzes the reversible synthesis of acetylcholine (ACh) from acetyl CoA and choline at cholinergic synapses. This Homo sapiens (Human) protein is Choline O-acetyltransferase (CHAT).